A 203-amino-acid chain; its full sequence is Late transcription elongation factor OPG110 (203 aa).

The segment covering 25–36 (KNSAENKDKNED) has biased composition (basic and acidic residues). Disordered regions lie at residues 25-74 (KNSA…EVEE) and 80-99 (EYHQTTEKNSPSPGVGDIVE). The span at 49–67 (PKTKRATTPRKPAATKRST) shows a compositional bias: basic residues. Phosphothreonine occurs at positions 84 and 85.

It belongs to the orthopoxvirus OPG110 family. Interacts with the DNA polymerase processivity factor A20. Interacts with B1R kinase. Interacts with the late transcription factors VLTF-1 and VLTF-3. Interacts with the late transcription elongation factor G2. Interacts with itself. Might be part of a transcription complex composed at least of G2, A18, and H5. Post-translationally, phosphorylated at multiple sites. Phosphorylation is necessary for cleavage activity. Phosphorylated by the viral B1R and F10 kinases.

It localises to the virion. It is found in the host cytoplasm. Involved in the co-transcriptional or post-transcriptional endoribonucleolytic cleavage that generates sequence-homogeneous 3' ends during late transcription. Involved in postreplicative transcription elongation on intermediate and late genes. Also involved in DNA replication and in multiple steps of virion morphogenesis. Required both for inclusion of virosoplasm into crescents as well as for maturation of immature virions (IV) into mature virions (MV). In Homo sapiens (Human), this protein is Late transcription elongation factor OPG110 (OPG110).